The primary structure comprises 654 residues: tRNA uridine 5-carboxymethylaminomethyl modification enzyme MnmG (654 aa).

FAD is bound at residue glycine 17–glycine 22. Glycine 289–phenylalanine 303 contacts NAD(+).

Belongs to the MnmG family. Homodimer. Heterotetramer of two MnmE and two MnmG subunits. The cofactor is FAD.

The protein resides in the cytoplasm. Its function is as follows. NAD-binding protein involved in the addition of a carboxymethylaminomethyl (cmnm) group at the wobble position (U34) of certain tRNAs, forming tRNA-cmnm(5)s(2)U34. The sequence is that of tRNA uridine 5-carboxymethylaminomethyl modification enzyme MnmG from Prochlorococcus marinus (strain MIT 9515).